The following is a 424-amino-acid chain: Calreticulin (424 aa).

A signal peptide spans 1–19; that stretch reads MRLLLCLIFLVFVFNFALS. Cysteine 105 and cysteine 137 are oxidised to a cystine. The an alpha-D-glucoside site is built by tyrosine 109, lysine 111, tyrosine 128, and aspartate 135. Tandem repeats lie at residues 191–202, 210–221, 227–238, 246–256, 260–270, 274–284, and 288–298. Residues 191 to 256 form a 4 X 12 AA approximate repeats region; the sequence is IQAGNLADDW…EAVKPEDWNE (66 aa). The tract at residues 260–298 is 3 X 11 AA approximate repeats; sequence GEWEAPTIANPEYKGEWKAKKIPNPEYKGEWVHPLIDNP. Glutamate 318 lines the an alpha-D-glucoside pocket. Residues 370 to 385 show a composition bias toward basic and acidic residues; sequence RKKADEKLAAEKAAEK. The disordered stretch occupies residues 370-424; the sequence is RKKADEKLAAEKAAEKEAEEADEEEEEVAEEDLVKTDDKKEEVKKSTKKVDHDEL. Positions 386–400 are enriched in acidic residues; the sequence is EAEEADEEEEEVAEE. Residues 401-424 show a composition bias toward basic and acidic residues; the sequence is DLVKTDDKKEEVKKSTKKVDHDEL. A Prevents secretion from ER motif is present at residues 421–424; sequence HDEL.

The protein belongs to the calreticulin family.

It localises to the endoplasmic reticulum lumen. Its function is as follows. Molecular calcium-binding chaperone promoting folding, oligomeric assembly and quality control in the ER via the calreticulin/calnexin cycle. This lectin may interact transiently with almost all of the monoglucosylated glycoproteins that are synthesized in the ER. This is Calreticulin (crtA) from Dictyostelium discoideum (Social amoeba).